A 725-amino-acid chain; its full sequence is A-agglutinin anchorage subunit (725 aa).

A signal peptide spans Met1–Ala24. A run of 19 repeats spans residues Val53–Thr149, Thr182–Ser188, Thr189–Ser195, Thr196–Ser202, Thr203–Ser209, Thr210–Ser216, Thr217–Ser223, Thr224–Ser230, Thr231–Leu237, Thr238–Ser244, Thr245–Ser251, Thr252–Ser258, Thr259–Ser265, Thr266–Ser272, Thr273–Ser279, Lys280–Ser286, Thr287–Ser293, Thr294–Leu300, and Thr301–Leu307. The interval Val53–Thr493 is 2 X approximate repeats. Disordered regions lie at residues Pro168–Ser318 and Ser335–Met363. Residues Thr182–Leu307 form an 18 X approximate tandem repeats, Ser/Thr-rich region. The 1-2 repeat unit spans residues Met395–Thr493. A lipid anchor (GPI-anchor amidated glycine) is attached at Gly699. Residues Ser700–Ser725 constitute a propeptide, removed in mature form.

In terms of assembly, heterodimer; disulfide-linked. Post-translationally, extensively O-glycosylated by PMT1 and PMT2. The GPI-anchor is attached to the protein in the endoplasmic reticulum and serves to target the protein to the cell surface. There, the glucosamine-inositol phospholipid moiety is cleaved off and the GPI-modified mannoprotein is covalently attached via its lipidless GPI glycan remnant to the 1,6-beta-glucan of the outer cell wall layer.

The protein resides in the secreted. It localises to the cell wall. Its subcellular location is the membrane. Cell wall anchoring subunit of the a-agglutinin heterodimer. S.cerevisiae a and alpha cells express the complementary cell surface glycoproteins a-agglutinin and alpha-agglutinin, respectively, which interact with one another to promote cellular aggregation during mating. This chain is A-agglutinin anchorage subunit (AGA1), found in Saccharomyces cerevisiae (strain ATCC 204508 / S288c) (Baker's yeast).